We begin with the raw amino-acid sequence, 95 residues long: Cell division protein FtsB (95 aa).

At 1-3 (MRW) the chain is on the cytoplasmic side. A helical membrane pass occupies residues 4–21 (VLAGLTALLLWLQGLLWF). At 22–95 (GEGGLNDVRG…QIIEREDDAR (74 aa)) the chain is on the periplasmic side. A coiled-coil region spans residues 26 to 76 (LNDVRGLSRSVEAQREEVDRLRQRNQALEAEVNDLKTGLEALEERARSELG).

It belongs to the FtsB family. As to quaternary structure, part of a complex composed of FtsB, FtsL and FtsQ.

It is found in the cell inner membrane. Essential cell division protein. May link together the upstream cell division proteins, which are predominantly cytoplasmic, with the downstream cell division proteins, which are predominantly periplasmic. This Alkalilimnicola ehrlichii (strain ATCC BAA-1101 / DSM 17681 / MLHE-1) protein is Cell division protein FtsB.